The chain runs to 339 residues: Anthranilate phosphoribosyltransferase (339 aa).

Residues Gly-79, Gly-82–Asp-83, Ser-87, Asn-89–Thr-92, Lys-107–Ser-115, and Ser-119 contribute to the 5-phospho-alpha-D-ribose 1-diphosphate site. Residue Gly-79 coordinates anthranilate. Ser-91 contacts Mg(2+). An anthranilate-binding site is contributed by Asn-110. Anthranilate is bound at residue Arg-165. Mg(2+) contacts are provided by Asp-224 and Glu-225.

It belongs to the anthranilate phosphoribosyltransferase family. In terms of assembly, homodimer. It depends on Mg(2+) as a cofactor.

The enzyme catalyses N-(5-phospho-beta-D-ribosyl)anthranilate + diphosphate = 5-phospho-alpha-D-ribose 1-diphosphate + anthranilate. It participates in amino-acid biosynthesis; L-tryptophan biosynthesis; L-tryptophan from chorismate: step 2/5. Its function is as follows. Catalyzes the transfer of the phosphoribosyl group of 5-phosphorylribose-1-pyrophosphate (PRPP) to anthranilate to yield N-(5'-phosphoribosyl)-anthranilate (PRA). The chain is Anthranilate phosphoribosyltransferase from Listeria welshimeri serovar 6b (strain ATCC 35897 / DSM 20650 / CCUG 15529 / CIP 8149 / NCTC 11857 / SLCC 5334 / V8).